The sequence spans 1429 residues: MFKTKRSLLNSSIAISFAVLGVQAQAETLELQAESFANSGGTYSDGQPNPVTIYNVNGQGAINFVNAGDYVDYNINALGGEYDIEYFVGTGVTSGPNIEVLVDVNGTWQSQGSVAVPYGSWDDFQSLTPSHTVTLPVGTSTVRLLAVGSTWQWNLESFRLTQVSPVEPVGDADNDGVNDNQDLCPNSPSGVTVDNNGCQITGGTDPGGESFVIQMEAFDSTGSDDSRAKGVIIGERGYPQDKHTVVDSVQTTDWVDYSINFPSSANYSVSMLASGQTDHATAVLYLDGTEINEVPVHTGSQADFANFQLAGSVYIASGTHTIRVQAQSSTGEFSWLWFGDALTFTNLDSDGGNGGEATQDADNDGVLDSSDSCPNTPTGEPADVTGCSASQLDDDNDGVSNNVDQCPNTVAGTEVDADGCEVIFADADNDGIEDSQDFCPNTPAGEAVNNSGCGASQLDADNDGVTNNIDQCPNTPAGTQVDASGCETDNGGEPGDSYYHNGQGLLFGRVDGATNFLGEEGYVANPDNYDVTTDLLETDDAIRANSTEVFRGEIYDADGHIAFYEHIDDSVRLYIDGQLVLSNDSWENSSQTTDLNLTPGWHNFELRLGNADGGSGAVSGIGFGIDVDGGTNFVHPSNLSPSMFRASGQVVVDPILPPSGGIYIQLEDFDETGTVGRVASDPNDGFVKGDSNVGWVTNGDWGKYHNVFLEAGTYRAFITVSTPAGGSYGARVDIDGEPFAWGYFDSTGGWDIAAEYELYGGHLVVESTGNHTLHVEAVGGSDWQWSGDLVRLAKVSDSAVKQPRVYNPNEHIVAEIQGPATGLQYLKTPVEIPLANKVLKSDVWYTYPQNRNLVVDGDTPYADFGATGAFWGHPPEHDFYDDTVIMDWAVNVVDDFQSEGFEYTARGEFDWGYGWFTEFTTNPQPHYVQTLDGRNVRMTFMGYLSHDGYNNNWLSNHSPAFVPFMKSQVDQILKANPDKLMFDTQTNSTRSTDMRTFGGDFSPYAMENFRVWLLKKYSNAQLVSMGINDITSFDYGAYLRAQGITHTDWSNAGDTISGNIPMMEDFIYFNRDVWNQKFAEVLEYIRQQRPNIEIGASTHLFESRGYIFNENITFLSGELNLGARTSISELPTNILVHLKGAQAVDKTLAYFPYPWEFDELRIQNAPRFGRGWVAQAYAYGGLFSIPANVWVGGEVFTWSPGADNYRDIYQFVRAQANLLDGYTSYAKAGYVHAMFSSMKAGFIDGGNQVQSSVKILTEDNINFDMLVFGDAGYPVVPRQADFDKFEYIFYDGDLNYLTAEQQAVLDAQGSKVKHIGQRGTIAGLQINVSINGSVSNETVSAVSRIHETDSTAPYVVHLINRPFAGGVTPILNNVEVAIPASYFPQGVTSAKLHLPDGSSSTVAVSTNANGDTVVSVSNLEVWGILELAH.

The first 26 residues, 1–26, serve as a signal peptide directing secretion; it reads MFKTKRSLLNSSIAISFAVLGVQAQA. CBM6 domains are found at residues 29 to 161 and 211 to 345; these read LELQ…FRLT and FVIQ…LTFT. 2 disordered regions span residues 349-400 and 474-495; these read SDGG…DGVS and NTPA…GEPG. Residues 369 to 378 are compositionally biased toward polar residues; it reads SSDSCPNTPT. The region spanning 490-638 is the PA14 domain; that stretch reads NGGEPGDSYY…GGTNFVHPSN (149 aa). One can recognise a CBM6 3 domain in the interval 662–793; sequence IYIQLEDFDE…QWSGDLVRLA (132 aa).

This sequence belongs to the glycosyl hydrolase 96 family. Homodimer. It depends on Ca(2+) as a cofactor.

The enzyme catalyses Endohydrolysis of 1,3-alpha-L-galactosidic linkages in agarose, yielding agarotetraose as the major product.. Alpha-agarase. Does not hydrolyze agarotetraose, agarohexaose, kappa-carrageenan, iota-carrageenan or lambda-carrageenan. This Alteromonas agarilytica protein is Alpha-agarase.